The following is a 525-amino-acid chain: 2,3-bisphosphoglycerate-independent phosphoglycerate mutase (525 aa).

Residues D15 and S65 each coordinate Mn(2+). S65 functions as the Phosphoserine intermediate in the catalytic mechanism. Residues H126, R156–D157, R188, R194, R258–R261, and K331 contribute to the substrate site. 5 residues coordinate Mn(2+): D398, H402, D439, H440, and H457.

The protein belongs to the BPG-independent phosphoglycerate mutase family. As to quaternary structure, monomer. It depends on Mn(2+) as a cofactor.

It catalyses the reaction (2R)-2-phosphoglycerate = (2R)-3-phosphoglycerate. It participates in carbohydrate degradation; glycolysis; pyruvate from D-glyceraldehyde 3-phosphate: step 3/5. Catalyzes the interconversion of 2-phosphoglycerate and 3-phosphoglycerate. The protein is 2,3-bisphosphoglycerate-independent phosphoglycerate mutase of Picosynechococcus sp. (strain ATCC 27264 / PCC 7002 / PR-6) (Agmenellum quadruplicatum).